The chain runs to 339 residues: Ribosomal RNA small subunit methyltransferase H (339 aa).

Residues 44–46 (GGY), Asp-61, Phe-88, Asp-105, and Gln-112 each bind S-adenosyl-L-methionine. The segment at 263-312 (PQAQSRHLPEKAAAQPVFEKPMKPVSPGEAETAENPRARSAHLRAARRTA) is disordered. Positions 301-312 (RSAHLRAARRTA) are enriched in basic residues.

The protein belongs to the methyltransferase superfamily. RsmH family.

It localises to the cytoplasm. It carries out the reaction cytidine(1402) in 16S rRNA + S-adenosyl-L-methionine = N(4)-methylcytidine(1402) in 16S rRNA + S-adenosyl-L-homocysteine + H(+). Its function is as follows. Specifically methylates the N4 position of cytidine in position 1402 (C1402) of 16S rRNA. This is Ribosomal RNA small subunit methyltransferase H from Chelativorans sp. (strain BNC1).